Here is a 177-residue protein sequence, read N- to C-terminus: Interleukin-7 (177 aa).

The first 25 residues, 1–25 (MFHVSFRYIFGLPPLILVLLPVASS), serve as a signal peptide directing secretion. Disulfide bonds link Cys-27-Cys-166, Cys-59-Cys-154, and Cys-72-Cys-117. Asn-95, Asn-116, and Asn-141 each carry an N-linked (GlcNAc...) asparagine glycan.

This sequence belongs to the IL-7/IL-9 family. Interacts with IL7R and CSF2RG.

The protein localises to the secreted. Hematopoietic cytokine that plays an essential role in the development, expansion, and survival of naive and memory T-cells and B-cells thereby regulating the number of mature lymphocytes and maintaining lymphoid homeostasis. Mechanistically, exerts its biological effects through a receptor composed of IL7RA subunit and the cytokine receptor common subunit gamma/CSF2RG. Binding to the receptor leads to activation of various kinases including JAK1 or JAK3 depending on the cell type and subsequently propagation of signals through activation of several downstream signaling pathways including the PI3K/Akt/mTOR or the JAK-STAT5. In Homo sapiens (Human), this protein is Interleukin-7 (IL7).